The primary structure comprises 187 residues: Ion-translocating oxidoreductase complex subunit B (187 aa).

Residues 1–23 (MIAAAASMSALGLGLGYLLGAAA) form a hydrophobic region. A 4Fe-4S domain is found at 29 to 88 (ETPPIVEEIAKILPGTNCGACGFPGCNGLAEAMAEGNAPVTACTPGGRDVALALAEIVTV). Cys-46, Cys-49, Cys-54, Cys-71, Cys-112, Cys-115, Cys-118, Cys-122, Cys-142, Cys-145, Cys-148, and Cys-152 together coordinate [4Fe-4S] cluster. 2 consecutive 4Fe-4S ferredoxin-type domains span residues 103-132 (MVAFVFEDHCTGCQKCFKRCPTDAIVGGAK) and 133-162 (QIHTVVMDACIGCDACIEVCPTEAIVSRVK).

The protein belongs to the 4Fe4S bacterial-type ferredoxin family. RnfB subfamily. The complex is composed of six subunits: RnfA, RnfB, RnfC, RnfD, RnfE and RnfG. [4Fe-4S] cluster serves as cofactor.

Its subcellular location is the cellular chromatophore membrane. Part of a membrane-bound complex that couples electron transfer with translocation of ions across the membrane. Required for nitrogen fixation. Involved in electron transfer to nitrogenase. The polypeptide is Ion-translocating oxidoreductase complex subunit B (Rhodobacter capsulatus (Rhodopseudomonas capsulata)).